Here is a 168-residue protein sequence, read N- to C-terminus: Lipoprotein signal peptidase (168 aa).

Transmembrane regions (helical) follow at residues 15-35 (WLWL…VVMD), 47-67 (VLPF…SFLS), 75-95 (WLFT…MSKL), and 107-127 (ALII…GFVV). Catalysis depends on residues Asp128 and Asp146. A helical transmembrane segment spans residues 141-161 (AFNLADTTICIGAAMIILDGF).

It belongs to the peptidase A8 family.

Its subcellular location is the cell inner membrane. It carries out the reaction Release of signal peptides from bacterial membrane prolipoproteins. Hydrolyzes -Xaa-Yaa-Zaa-|-(S,diacylglyceryl)Cys-, in which Xaa is hydrophobic (preferably Leu), and Yaa (Ala or Ser) and Zaa (Gly or Ala) have small, neutral side chains.. Its pathway is protein modification; lipoprotein biosynthesis (signal peptide cleavage). Its function is as follows. This protein specifically catalyzes the removal of signal peptides from prolipoproteins. This chain is Lipoprotein signal peptidase, found in Vibrio campbellii (strain ATCC BAA-1116).